The primary structure comprises 185 residues: Ethylene-responsive transcription factor ERF017 (185 aa).

Residues 11 to 68 constitute a DNA-binding region (AP2/ERF); it reads KYKGVRKRKWGKWVSEIRLPNSRERIWLGSYDTPEKAARAFDAALYCLRGNNAKFNFP.

This sequence belongs to the AP2/ERF transcription factor family. ERF subfamily.

It localises to the nucleus. Probably acts as a transcriptional activator. Binds to the GCC-box pathogenesis-related promoter element. May be involved in the regulation of gene expression by stress factors and by components of stress signal transduction pathways. The protein is Ethylene-responsive transcription factor ERF017 (ERF017) of Arabidopsis thaliana (Mouse-ear cress).